The chain runs to 360 residues: G-protein coupled receptor 15 (360 aa).

Residues 1 to 33 are Extracellular-facing; it reads MDPEETSVYLDYYYATSPNPDIRETHSHVPYTS. A helical membrane pass occupies residues 34 to 54; sequence VFLPVFYTAVFLTGVLGNLVL. The Cytoplasmic segment spans residues 55-69; that stretch reads MGALHFKPGSRRLID. The chain crosses the membrane as a helical span at residues 70–90; the sequence is IFIINLAASDFIFLVTLPLWV. Residues 91–120 are Extracellular-facing; the sequence is DKEASLGLWRTGSFLCKGSSYMISVNMHCS. Residues 121–141 form a helical membrane-spanning segment; it reads VFLLTCMSVDRYLAIVCPVVS. Residues 142-149 are Cytoplasmic-facing; the sequence is RKFRRTDC. A helical membrane pass occupies residues 150-170; sequence AYVVCASIWFISCLLGLPTLL. At 171–192 the chain is on the extracellular side; that stretch reads SRELTLIDDKPYCAEKKATPLK. A helical transmembrane segment spans residues 193 to 213; it reads LIWSLVALIFTFFVPLLSIVT. The Cytoplasmic segment spans residues 214–239; sequence CYCCIARKLCAHYQQSGKHNKKLKKS. Residues 240 to 260 form a helical membrane-spanning segment; that stretch reads IKIIFIVVAAFLVSWLPFNTS. Residues 261-284 lie on the Extracellular side of the membrane; the sequence is KLLAIVSGLQQERYFPSAILQLGM. The helical transmembrane segment at 285-305 threads the bilayer; sequence EVSGPLAFANSCVNPFIYYIF. Topologically, residues 306–360 are cytoplasmic; that stretch reads DSYIRRAIVHCLCPCLKNYDFGSSTETSDSHLTKALSTFIHAEDFTRRRKRSVSL. Residue Ser-359 is modified to Phosphoserine.

It belongs to the G-protein coupled receptor 1 family. Interacts with adapter YWHAE; this interaction promotes ER-to-Golgi transport of GPR15. In terms of processing, phosphorylation is necessary for YWHAE binding and efficient surface expression. Post-translationally, O-glycosylated. Sialylated O-glycans in the N-terminal tail inhibits binding of GPR15LG. Sulfation is required for efficient binding of GPR15LG.

Its subcellular location is the cell membrane. Its function is as follows. G protein-coupled receptor that plays an important role in immune homeostasis. Acts via its natural ligand GPR15LG, a chemokine-like polypeptide strongly expressed in gastrointestinal tissues. GPR15-GPR15LG signaling axis regulates intestinal homeostasis and inflammation through the migration of immune cells. Controls thereby the specific homing of T-cells, particularly FOXP3+ regulatory T-cells (Tregs), to the large intestine lamina propria. Also required for skin localization of thymus-derived dendritic epidermal T-cells. Plays an important role in mediating cytoprotective function as well as angiogenesis of thrombomodulin. Mechanistically, preferentially signals through the Gi/o pathway to inhibit adenylate cyclase activity and activate a phosphatidylinositol-calcium second messenger system that regulates the release of Ca(2+) ions from intracellular stores. The protein is G-protein coupled receptor 15 (GPR15) of Macaca nemestrina (Pig-tailed macaque).